Here is a 210-residue protein sequence, read N- to C-terminus: Histidine biosynthesis bifunctional protein HisIE (210 aa).

The phosphoribosyl-AMP cyclohydrolase stretch occupies residues 1–106 (MTKYKIDFSK…SCFNTEVPFS (106 aa)). Residues 107–210 (VQTLAQTVQD…KGERQNIEQW (104 aa)) are phosphoribosyl-ATP pyrophosphohydrolase.

This sequence in the N-terminal section; belongs to the PRA-CH family. The protein in the C-terminal section; belongs to the PRA-PH family.

The protein resides in the cytoplasm. It catalyses the reaction 1-(5-phospho-beta-D-ribosyl)-ATP + H2O = 1-(5-phospho-beta-D-ribosyl)-5'-AMP + diphosphate + H(+). It carries out the reaction 1-(5-phospho-beta-D-ribosyl)-5'-AMP + H2O = 1-(5-phospho-beta-D-ribosyl)-5-[(5-phospho-beta-D-ribosylamino)methylideneamino]imidazole-4-carboxamide. Its pathway is amino-acid biosynthesis; L-histidine biosynthesis; L-histidine from 5-phospho-alpha-D-ribose 1-diphosphate: step 2/9. It participates in amino-acid biosynthesis; L-histidine biosynthesis; L-histidine from 5-phospho-alpha-D-ribose 1-diphosphate: step 3/9. In Staphylococcus aureus (strain Mu50 / ATCC 700699), this protein is Histidine biosynthesis bifunctional protein HisIE (hisI).